The chain runs to 819 residues: Leucine--tRNA ligase (819 aa).

The 'HIGH' region motif lies at 36 to 46 (PYPSGKIHMGH). Positions 586–590 (KMSKS) match the 'KMSKS' region motif. Lysine 589 provides a ligand contact to ATP.

Belongs to the class-I aminoacyl-tRNA synthetase family.

It is found in the cytoplasm. It carries out the reaction tRNA(Leu) + L-leucine + ATP = L-leucyl-tRNA(Leu) + AMP + diphosphate. The protein is Leucine--tRNA ligase of Wolbachia pipientis subsp. Culex pipiens (strain wPip).